The sequence spans 124 residues: Protein MGF 110-4L (124 aa).

An N-terminal signal peptide occupies residues 1 to 28; it reads MLVIFLGILGLLANQVLGLPIQAGGHLC. Asn64 carries an N-linked (GlcNAc...) asparagine; by host glycan. Residues 121 to 124 carry the Prevents secretion from ER motif; the sequence is KEDL.

This sequence belongs to the asfivirus MGF 110 family.

It is found in the virion. Its subcellular location is the host endoplasmic reticulum-Golgi intermediate compartment. In terms of biological role, causes the redistribution of lumenal ER protein to an enlarged ERGIC compartment. This Ornithodoros (relapsing fever ticks) protein is Protein MGF 110-4L.